Consider the following 304-residue polypeptide: Secreted mono- and diacylglycerol lipase MDL2 (304 aa).

The first 19 residues, 1-19, serve as a signal peptide directing secretion; that stretch reads MILGRTISLFLGCSALVSG. C55 and C297 are disulfide-bonded. 2 N-linked (GlcNAc...) asparagine glycosylation sites follow: N102 and N161. Residue S171 is the Nucleophile of the active site. D228 is an active-site residue. N-linked (GlcNAc...) asparagine glycosylation occurs at N253. H281 is an active-site residue.

Belongs to the AB hydrolase superfamily. Lipase family. Class 3 subfamily.

It localises to the secreted. The protein localises to the cell wall. The catalysed reaction is a monoacylglycerol + H2O = glycerol + a fatty acid + H(+). It carries out the reaction a diacylglycerol + H2O = a monoacylglycerol + a fatty acid + H(+). Functionally, secreted lipase involved in Dandruff and seborrheic dermatitis (D/SD) probably via lipase-mediated breakdown of sebaceous lipids and release of irritating free fatty acids. Shows activity against monoglyceride and diglyceride substrates, but not triglyceride substrates and does not exhibit regio-selective production of diacylglycerols. Hydrolyzes both 1,2- and 1,3-diacylglycerols. Also hydrolyzes distearin, dilinolein and dipalmitolein. Cleaves oleic acid from 1,2 isomers of diolein on both the 1 and the 2 position of the glycerol backbone, resulting mainly in free fatty acids but no monoolein is detected. Shows activity on monoolein and liberates mostly free fatty acids, but can also perform the reverse reaction and produce diolein. This Malassezia globosa (strain ATCC MYA-4612 / CBS 7966) (Dandruff-associated fungus) protein is Secreted mono- and diacylglycerol lipase MDL2.